Consider the following 546-residue polypeptide: Glutathione reductase (546 aa).

The N-terminal 45 residues, 2-46, are a transit peptide targeting the apicoplast; the sequence is YKHRYFHFFFFFFFFLVSTKIIRSFTFLNNNTNLSNPVYFKKKAN. FAD is bound by residues Ser58 and Gly59. Ser58 is a binding site for glutathione. A glutathione-binding site is contributed by Arg65. The FAD site is built by Glu78, Thr85, Cys86, and Lys94. A disulfide bridge connects residues Cys86 and Cys91. A glutathione-binding site is contributed by Tyr141. Ala157 lines the FAD pocket. 5 residues coordinate NADP(+): Ile233, Glu236, Arg253, Arg259, and Gly318. 2 residues coordinate FAD: Asp358 and Thr400. Residue Arg408 participates in glutathione binding. Val430 contributes to the NADP(+) binding site. His531 is a binding site for FAD. The active-site Proton acceptor is His531.

Belongs to the class-I pyridine nucleotide-disulfide oxidoreductase family. Homodimer. It depends on FAD as a cofactor.

The protein localises to the cytoplasm. Its subcellular location is the plastid. The protein resides in the apicoplast. The enzyme catalyses 2 glutathione + NADP(+) = glutathione disulfide + NADPH + H(+). In terms of biological role, catalyzes the reduction of glutathione disulfide (GSSG) to reduced glutathione (GSH). Constitutes the major mechanism to maintain a high GSH:GSSG ratio in the cytosol. This is Glutathione reductase from Plasmodium falciparum (isolate 3D7).